A 207-amino-acid polypeptide reads, in one-letter code: MFISFEGCEGTGKTTHSRYLFEKLSKKYSCVLTKEPGGGLFNEVIRNILLHSSNKQIDFHTEALLFAADRAEHLSKLIIPALQQNKIVICDRYLDSTIAYQVYARGLSQDFVLNINNFALNYIPNITFYLDLDPKIGIQRVKQFRPKEINSFDLQKLSFHKKVRKGYLDLCQKDQQKRIFLIDASKPLENIYNIIEQKLKEVFQIEL.

7–14 contributes to the ATP binding site; the sequence is GCEGTGKT.

It belongs to the thymidylate kinase family.

The catalysed reaction is dTMP + ATP = dTDP + ADP. Its function is as follows. Phosphorylation of dTMP to form dTDP in both de novo and salvage pathways of dTTP synthesis. The protein is Thymidylate kinase of Onion yellows phytoplasma (strain OY-M).